The primary structure comprises 188 residues: Crossover junction endodeoxyribonuclease RuvC (188 aa).

Residues Asp-7, Glu-68, and Asp-141 contribute to the active site. Mg(2+)-binding residues include Asp-7, Glu-68, and Asp-141.

This sequence belongs to the RuvC family. In terms of assembly, homodimer which binds Holliday junction (HJ) DNA. The HJ becomes 2-fold symmetrical on binding to RuvC with unstacked arms; it has a different conformation from HJ DNA in complex with RuvA. In the full resolvosome a probable DNA-RuvA(4)-RuvB(12)-RuvC(2) complex forms which resolves the HJ. Mg(2+) serves as cofactor.

It localises to the cytoplasm. It carries out the reaction Endonucleolytic cleavage at a junction such as a reciprocal single-stranded crossover between two homologous DNA duplexes (Holliday junction).. The RuvA-RuvB-RuvC complex processes Holliday junction (HJ) DNA during genetic recombination and DNA repair. Endonuclease that resolves HJ intermediates. Cleaves cruciform DNA by making single-stranded nicks across the HJ at symmetrical positions within the homologous arms, yielding a 5'-phosphate and a 3'-hydroxyl group; requires a central core of homology in the junction. The consensus cleavage sequence is 5'-(A/T)TT(C/G)-3'. Cleavage occurs on the 3'-side of the TT dinucleotide at the point of strand exchange. HJ branch migration catalyzed by RuvA-RuvB allows RuvC to scan DNA until it finds its consensus sequence, where it cleaves and resolves the cruciform DNA. This Mycobacterium leprae (strain TN) protein is Crossover junction endodeoxyribonuclease RuvC.